The chain runs to 184 residues: ATP synthase subunit delta (184 aa).

Belongs to the ATPase delta chain family. F-type ATPases have 2 components, F(1) - the catalytic core - and F(0) - the membrane proton channel. F(1) has five subunits: alpha(3), beta(3), gamma(1), delta(1), epsilon(1). CF(0) has four main subunits: a(1), b(1), b'(1) and c(10-14). The alpha and beta chains form an alternating ring which encloses part of the gamma chain. F(1) is attached to F(0) by a central stalk formed by the gamma and epsilon chains, while a peripheral stalk is formed by the delta, b and b' chains.

Its subcellular location is the cellular thylakoid membrane. Functionally, f(1)F(0) ATP synthase produces ATP from ADP in the presence of a proton or sodium gradient. F-type ATPases consist of two structural domains, F(1) containing the extramembraneous catalytic core and F(0) containing the membrane proton channel, linked together by a central stalk and a peripheral stalk. During catalysis, ATP synthesis in the catalytic domain of F(1) is coupled via a rotary mechanism of the central stalk subunits to proton translocation. Its function is as follows. This protein is part of the stalk that links CF(0) to CF(1). It either transmits conformational changes from CF(0) to CF(1) or is implicated in proton conduction. This chain is ATP synthase subunit delta, found in Gloeothece citriformis (strain PCC 7424) (Cyanothece sp. (strain PCC 7424)).